A 315-amino-acid chain; its full sequence is Cytochrome f (315 aa).

Positions 1-30 are cleaved as a signal peptide; that stretch reads MRTFLKFSTLVSKGVLVLVCSFFLTASSNA. Heme-binding residues include Tyr-31, Cys-51, Cys-54, and His-55. A helical transmembrane segment spans residues 281–300; it reads IQGLLVFFLFVLLAQVFLVL.

It belongs to the cytochrome f family. As to quaternary structure, the 4 large subunits of the cytochrome b6-f complex are cytochrome b6, subunit IV (17 kDa polypeptide, petD), cytochrome f and the Rieske protein, while the 4 small subunits are PetG, PetL, PetM and PetN. The complex functions as a dimer. The cofactor is heme.

The protein localises to the plastid. It is found in the chloroplast thylakoid membrane. Component of the cytochrome b6-f complex, which mediates electron transfer between photosystem II (PSII) and photosystem I (PSI), cyclic electron flow around PSI, and state transitions. The protein is Cytochrome f (petA) of Chlorella vulgaris (Green alga).